Reading from the N-terminus, the 370-residue chain is MTERIGKIQTIKGLIEKDELGITHMHEHIFINYLDYFEKPNEQELKMCCLGGGSGSGNSNSNKTIEDLSNEKISLINNHWVQYNYNKNLHNLQLNEMEIAIRELEMFKRNGGSTIVEVTTKGIGRDPLQCLKVSQELNINIVMGAGYYLDKSISQFVQSMTEKQMEDEIVKQCLIGIDDTSIKAGIIGEVGCSFPLTNNEKKSLIASAKAQQRTGLSISIHPGRSQTAPLEIIQILKDSGADLSRVIIGHIDRTIHDINILLETAKTGCILEFDLFGMEISHYPFGGEVGMPSDNQRIEWIYQLIKHGYGENIVISHDIYTKHRLVSYGGHGYSHILFNIIPRMKKFGYSDTDINNILINNPKRLLTIIK.

Residues H26, H28, E189, H221, H250, and D318 each coordinate a divalent metal cation.

The protein belongs to the metallo-dependent hydrolases superfamily. Phosphotriesterase family. The cofactor is a divalent metal cation.

It is found in the cytoplasm. The protein localises to the cytosol. It carries out the reaction N-acetyltaurine + H2O = taurine + acetate. N-acetyltaurine hydrolase catalyzes the hydrolysis of N-acetyltaurine into taurine and acetate. This Dictyostelium discoideum (Social amoeba) protein is N-acetyltaurine hydrolase (pter).